The primary structure comprises 529 residues: Putative UPF0481 protein At3g02645 (529 aa).

N-linked (GlcNAc...) asparagine glycans are attached at residues Asn-365 and Asn-403. Residues 498–518 (ILAFLAAVLLLMLVSLQLFSL) traverse the membrane as a helical segment.

This sequence belongs to the UPF0481 family.

The protein resides in the membrane. The polypeptide is Putative UPF0481 protein At3g02645 (Arabidopsis thaliana (Mouse-ear cress)).